The primary structure comprises 1398 residues: Protein timeless (1398 aa).

Residues 237–268 (VSTLQKLLSLWFEASLSESSEDNESNTSPPKQ) are necessary for normal circadian rhythm. Disordered regions lie at residues 254–300 (ESSE…GGMR), 322–452 (ARVP…QKFN), 478–555 (TKGK…LRRK), 1127–1147 (TASS…SSVS), and 1220–1239 (NHRT…SSTT). Residues 273-290 (SSPMLTSDPTSDSSDNGS) show a composition bias toward low complexity. A compositionally biased stretch (gly residues) spans 291–300 (NGRGMGGGMR). The segment covering 338–355 (MTGNDSEQPGSPEQSQPA) has biased composition (polar residues). The segment covering 365-375 (EDQRHRQLNEH) has biased composition (basic and acidic residues). Positions 376–390 (GEEDEDEDEVEEEEY) are enriched in acidic residues. Composition is skewed to polar residues over residues 400–421 (LNLT…SSAP), 440–452 (ASTS…QKFN), and 504–515 (QVENQESISTSS). A compositionally biased stretch (low complexity) spans 522–531 (QGKPQHQKPP). Positions 550–560 (KELRRKKLVKR) match the Nuclear localization signal motif.

It belongs to the timeless family. As to quaternary structure, forms a heterodimer with period (PER); the complex then translocates into the nucleus. Post-translationally, phosphorylated with a circadian rhythmicity. Expressed in head, photoreceptors, lateral neurons and glial cells in the lamina and medulla of the optic lobes. Expression follows a light-dark cycle, levels show a significant decrease at the end of the night and then remain low throughout the light period (at protein level).

Its subcellular location is the nucleus. The protein localises to the cytoplasm. It localises to the perinuclear region. Its function is as follows. Required for the production of circadian rhythms. The biological cycle depends on the rhythmic formation and nuclear localization of the TIM-PER complex. Light induces the degradation of TIM, which promotes elimination of PER. Nuclear activity of the heterodimer coordinatively regulates PER and TIM transcription through a negative feedback loop. Behaves as a negative element in circadian transcriptional loop. Does not appear to bind DNA, suggesting indirect transcriptional inhibition. This Drosophila melanogaster (Fruit fly) protein is Protein timeless (tim).